The sequence spans 157 residues: Large ribosomal subunit protein uL11 (157 aa).

2 disordered regions span residues 1–28 (MAGT…GPTP) and 138–157 (NNPR…DILK). Basic and acidic residues predominate over residues 139–157 (NPREFKSRMEDGEYDDILK).

This sequence belongs to the universal ribosomal protein uL11 family. Part of the ribosomal stalk of the 50S ribosomal subunit. Interacts with L10 and the large rRNA to form the base of the stalk. L10 forms an elongated spine to which L12 dimers bind in a sequential fashion forming a multimeric L10(L12)X complex.

Forms part of the ribosomal stalk which helps the ribosome interact with GTP-bound translation factors. This Haloquadratum walsbyi (strain DSM 16790 / HBSQ001) protein is Large ribosomal subunit protein uL11.